The sequence spans 447 residues: Rab GDP dissociation inhibitor alpha (447 aa).

Phosphoserine is present on S427.

The protein belongs to the Rab GDI family. As to quaternary structure, interacts with RHOH. Interacts with the non-phosphorylated forms of RAB1A, RAB3A, RAB5A, RAB5B, RAB5C, RAB8A, RAB8B, RAB10, RAB12, RAB35, and RAB43. Interacts with RAB3A.

The protein localises to the cytoplasm. It localises to the golgi apparatus. The protein resides in the trans-Golgi network. Its function is as follows. Regulates the GDP/GTP exchange reaction of most Rab proteins by inhibiting the dissociation of GDP from them, and the subsequent binding of GTP to them. Promotes the dissociation of GDP-bound Rab proteins from the membrane and inhibits their activation. Promotes the dissociation of RAB1A, RAB3A, RAB5A and RAB10 from membranes. The protein is Rab GDP dissociation inhibitor alpha (GDI1) of Bos taurus (Bovine).